Consider the following 185-residue polypeptide: uncharacterized protein (185 aa).

The next 5 membrane-spanning stretches (helical) occupy residues 4–24 (IAWM…LGLA), 35–55 (GLLF…ATGV), 60–80 (GASA…SIAY), 123–143 (VLAY…INDS), and 152–172 (ILKL…SYFI).

The protein localises to the cell membrane. This is an uncharacterized protein from Bacillus subtilis (strain 168).